Consider the following 1503-residue polypeptide: Rho GTPase-activating protein 5 (1503 aa).

FF domains are found at residues 267–325 (QLVV…HIEQ), 366–420 (KLME…HVQH), 427–481 (RIEM…HQRE), and 482–548 (IVEK…HIGF). Position 550 is a 3'-nitrotyrosine (Tyr550). A phosphoserine mark is found at Ser590 and Ser765. Residues 590–763 (STNIDKVNLF…LESVKHNLDV (174 aa)) form the pG1 pseudoGTPase domain. The pG2 pseudoGTPase domain occupies 779 to 944 (RIVMCAMCGD…FSDVLEKKNM (166 aa)). Phosphoserine occurs at positions 951 and 968. 3 disordered regions span residues 975-1004 (YNNY…LPTP), 1022-1050 (HSTP…PKTN), and 1069-1091 (NPRK…SDNY). A compositionally biased stretch (pro residues) spans 1036–1045 (VPPPIKPKPV). Position 1115 is a phosphoserine (Ser1115). Disordered stretches follow at residues 1129–1157 (NTQG…YKYK) and 1169–1255 (YRRT…TRRN). Positions 1141-1151 (RTSKGHGERRP) are enriched in basic and acidic residues. A phosphoserine mark is found at Ser1196, Ser1203, and Ser1219. The Rho-GAP domain maps to 1263-1450 (MPLQDLVTAE…TFIQQCQFFF (188 aa)).

As to quaternary structure, may interact with RASA1/p120GAP. As to expression, expressed in spinal cord, cerebellum, kidney, testis and lung.

It localises to the cytoplasm. The protein localises to the cell membrane. Functionally, GTPase-activating protein for Rho family members. This Mus musculus (Mouse) protein is Rho GTPase-activating protein 5 (Arhgap5).